Consider the following 197-residue polypeptide: Regulator of free ubiquitin chains 1 (197 aa).

This sequence belongs to the RFU1 family.

The protein resides in the endosome. Inhibitor of the DOA4 deubiquitinase involved in the regulation of protein degradation by the proteasome and maintenance of a normal level of free ubiquitin. The sequence is that of Regulator of free ubiquitin chains 1 (RFU1) from Vanderwaltozyma polyspora (strain ATCC 22028 / DSM 70294 / BCRC 21397 / CBS 2163 / NBRC 10782 / NRRL Y-8283 / UCD 57-17) (Kluyveromyces polysporus).